A 151-amino-acid polypeptide reads, in one-letter code: Large ribosomal subunit protein uL22 (151 aa).

The tract at residues 1–25 (MARINYSVKEDPETTSKAMGSELHI) is disordered.

This sequence belongs to the universal ribosomal protein uL22 family. Part of the 50S ribosomal subunit.

Functionally, this protein binds specifically to 23S rRNA. It makes multiple contacts with different domains of the 23S rRNA in the assembled 50S subunit and ribosome. In terms of biological role, the globular domain of the protein is located near the polypeptide exit tunnel on the outside of the subunit, while an extended beta-hairpin is found that lines the wall of the exit tunnel in the center of the 70S ribosome. The polypeptide is Large ribosomal subunit protein uL22 (Methanosarcina barkeri (strain Fusaro / DSM 804)).